A 197-amino-acid polypeptide reads, in one-letter code: Phosphoheptose isomerase (197 aa).

One can recognise an SIS domain in the interval 34-196 (MVNCLLGGNK…DRTLFPQDEQ (163 aa)). Position 49 to 51 (49 to 51 (NGG)) interacts with substrate. 2 residues coordinate Zn(2+): H58 and E62. Residues E62, 91–92 (ND), 117–119 (STS), S122, and Q172 contribute to the substrate site. 2 residues coordinate Zn(2+): Q172 and H180.

The protein belongs to the SIS family. GmhA subfamily. Homotetramer. It depends on Zn(2+) as a cofactor.

It is found in the cytoplasm. The enzyme catalyses 2 D-sedoheptulose 7-phosphate = D-glycero-alpha-D-manno-heptose 7-phosphate + D-glycero-beta-D-manno-heptose 7-phosphate. It participates in carbohydrate biosynthesis; D-glycero-D-manno-heptose 7-phosphate biosynthesis; D-glycero-alpha-D-manno-heptose 7-phosphate and D-glycero-beta-D-manno-heptose 7-phosphate from sedoheptulose 7-phosphate: step 1/1. Its function is as follows. Catalyzes the isomerization of sedoheptulose 7-phosphate in D-glycero-D-manno-heptose 7-phosphate. The sequence is that of Phosphoheptose isomerase from Shewanella pealeana (strain ATCC 700345 / ANG-SQ1).